We begin with the raw amino-acid sequence, 727 residues long: Probable metal-nicotianamine transporter YSL14 (727 aa).

Low complexity-rich tracts occupy residues 1–10 and 18–27; these read MAQHTAAAAG and AEAAAAAAAG. The tract at residues 1 to 61 is disordered; that stretch reads MAQHTAAAAG…RNGGADDPDA (61 aa). Gly residues predominate over residues 45-54; sequence AGGGGGGRNG. Transmembrane regions (helical) follow at residues 84 to 104, 107 to 127, 152 to 172, 194 to 214, 256 to 276, 314 to 334, 359 to 379, 432 to 452, 460 to 480, 492 to 512, 546 to 566, 604 to 624, 646 to 666, and 681 to 701; these read AFVV…KLNL, GIIP…VRLW, CVVS…LFGM, LGWM…ALVP, LGKY…YTAG, IVNV…WPLI, VFIS…KVLI, VAYG…PEIF, ILVA…GSGL, LAIF…LVGL, FISQ…VFWL, PENC…INLI, FYIG…LFVW, and VASG…ILAL.

This sequence belongs to the YSL (TC 2.A.67.2) family. Expressed in leaves and at low levels in roots.

The protein resides in the membrane. Functionally, may be involved in the transport of nicotianamine-chelated metals. This chain is Probable metal-nicotianamine transporter YSL14 (YSL14), found in Oryza sativa subsp. japonica (Rice).